The following is a 580-amino-acid chain: MHLSAVLNALLVSVLAAVLWKHVRLREHAASLEEELAVGRRAADPAPALRIDYPKALQILTEGGTHMVCTGRTHTDRLCRFKWLCYSSEAEEFIFFHGNASVMLPSLGSRRFQPALLDLSTVEDHNTQYFNFVELPAAALRFMPKPVFVPDVALIANRFNPDNLMHVFHDDLLPLFYTLRQFPGLAREARLFFMEGWGEGAHFDLYKLLSPKQPLLRAQLKALGRLLCFSHAFVGLSKVTTWYQYGFVQPQGPKANILVSGNEIRQFAHFLMEKLNVSQAGGPLGEEYILVFSRTQNRLILNEAELLLALAQEFQMKTVTVSLEDHAFADVVRLVSNASMLVSMHGAQLVTALFLPRGAAVVELFPYAVNPDHYTPYKTLATLPGMDLQYIAWQNTMPENTVTHPERPWDQGGIAHLDRAEQARILQSREVPRHLCCRNPEWLFRIYQDTKVDIPSLIQTIRRVVKGHPGPRKQKWTVSLYPGKVREARCQASVQGASEARLSVSWQIPWNLKYLKVREVKYEVWLQEQGENTYVPYMLALQNHTFTENIKPFTTYLVWIRCIFNKTLLGPFADVLVCST.

The Cytoplasmic portion of the chain corresponds to 1-4 (MHLS). Residues 5 to 25 (AVLNALLVSVLAAVLWKHVRL) traverse the membrane as a helical; Signal-anchor for type II membrane protein segment. The Lumenal portion of the chain corresponds to 26 to 580 (REHAASLEEE…PFADVLVCST (555 aa)). Residues N99 and N276 are each glycosylated (N-linked (GlcNAc...) asparagine). In terms of domain architecture, Fibronectin type-III spans 488–580 (ARCQASVQGA…PFADVLVCST (93 aa)).

It belongs to the glycosyltransferase 61 family.

The protein localises to the endoplasmic reticulum membrane. The enzyme catalyses 3-O-(alpha-D-mannosyl)-L-threonyl-[protein] + UDP-N-acetyl-alpha-D-glucosamine = 3-O-(N-acetyl-beta-D-glucosaminyl-(1-&gt;4)-alpha-D-mannosyl)-L-threonyl-[protein] + UDP + H(+). The protein operates within protein modification; protein glycosylation. Functionally, O-linked mannose beta-1,4-N-acetylglucosaminyltransferase that transfers UDP-N-acetyl-D-glucosamine to the 4-position of the mannose to generate N-acetyl-D-glucosamine-beta-1,4-O-D-mannosylprotein. Involved in the biosynthesis of the phosphorylated O-mannosyl trisaccharide (N-acetylgalactosamine-beta-3-N-acetylglucosamine-beta-4-(phosphate-6-)mannose), a carbohydrate structure present in alpha-dystroglycan (DAG1), which is required for binding laminin G-like domain-containing extracellular proteins with high affinity. The chain is Protein O-linked-mannose beta-1,4-N-acetylglucosaminyltransferase 2 (POMGNT2) from Bos taurus (Bovine).